We begin with the raw amino-acid sequence, 531 residues long: Peptide chain release factor 3 (531 aa).

Residues 13-282 (SKRRTFAIIS…GLTQWAPSPM (270 aa)) enclose the tr-type G domain. GTP contacts are provided by residues 22 to 29 (SHPDAGKT), 90 to 94 (DTPGH), and 144 to 147 (NKLD).

This sequence belongs to the TRAFAC class translation factor GTPase superfamily. Classic translation factor GTPase family. PrfC subfamily.

It is found in the cytoplasm. Functionally, increases the formation of ribosomal termination complexes and stimulates activities of RF-1 and RF-2. It binds guanine nucleotides and has strong preference for UGA stop codons. It may interact directly with the ribosome. The stimulation of RF-1 and RF-2 is significantly reduced by GTP and GDP, but not by GMP. The protein is Peptide chain release factor 3 of Vibrio cholerae serotype O1 (strain ATCC 39315 / El Tor Inaba N16961).